The primary structure comprises 432 residues: 2-oxoglutarate-dependent dioxygenase AOP2 (432 aa).

The region spanning 281–378 (SGDDVEANDD…RYTAAIFTCP (98 aa)) is the Fe2OG dioxygenase domain. Residues His301, Asp303, and His358 each contribute to the Fe cation site. A 2-oxoglutarate-binding site is contributed by Arg369.

It belongs to the iron/ascorbate-dependent oxidoreductase family. The cofactor is Fe(2+).

Functionally, 2-oxoglutarate-dependent dioxygenase involved in glucosinolates biosynthesis. Catalyzes the conversion of methylsulfinylalkyl glucosinolates to alkenyl glucosinolates. The sequence is that of 2-oxoglutarate-dependent dioxygenase AOP2 (AOP2) from Arabidopsis thaliana (Mouse-ear cress).